The following is a 596-amino-acid chain: Zinc finger CCCH domain-containing protein 64 (596 aa).

Disordered stretches follow at residues 243–263 (LSPTPTSTMSPAELSAKPPKT) and 272–291 (DGAAESKKRPNDSDSDSQYW). C3H1-type zinc fingers lie at residues 303 to 331 (SQGEKLCFKFVCSGSCPRGEDCHFQHNAE) and 335 to 363 (QCRRGVCLDLIIKGKCEKGPECSYKHEFQ).

In Arabidopsis thaliana (Mouse-ear cress), this protein is Zinc finger CCCH domain-containing protein 64.